Consider the following 456-residue polypeptide: Molybdate transporter 1 (456 aa).

The next 9 membrane-spanning stretches (helical) occupy residues 67-87, 110-130, 133-153, 177-197, 225-245, 309-329, 354-374, 377-397, and 417-437; these read LIFT…PMPV, IMAA…SGLM, VFNI…GLAF, PWLG…IVLV, VIAN…LAFI, AASV…FGAM, LLGV…VGIL, FPVG…AMAA, and LGSN…VLWM.

It belongs to the SLC26A/SulP transporter (TC 2.A.53) family. As to expression, strongly expressed in roots. Detected in the vascular tissues of hypocotyls, in petioles and vascular tissues of cotyledons and leaves, in mesophyll cells, stamen, sepals and siliques.

Its subcellular location is the cell membrane. The protein localises to the endomembrane system. The protein resides in the mitochondrion membrane. With respect to regulation, not inhibited by sulfate. Its function is as follows. High affinity molybdate transporter. Unable to transport sulfate. The polypeptide is Molybdate transporter 1 (MOT1) (Arabidopsis thaliana (Mouse-ear cress)).